A 939-amino-acid chain; its full sequence is Dynamin-like GTPase MGM1, mitochondrial (939 aa).

Residues 1–27 constitute a mitochondrion transit peptide; sequence MSAQLRAAAAITPAARRVISGPAAVRR. Residues 85–103 form a helical membrane-spanning segment; the sequence is FIRVPALFGGMMLGAVGWV. Residues 170 to 183 are compositionally biased toward gly residues; that stretch reads AGEGSGSGEGGPNG. Residues 170 to 196 are disordered; it reads AGEGSGSGEGGPNGGPEPPRQSRAGAA. The Dynamin-type G domain occupies 249–522; the sequence is TVTLPSIVVI…LEQQMSSKLN (274 aa). A G1 motif region spans residues 259–266; the sequence is GSQSSGKS. S262, G264, K265, S266, S267, and G281 together coordinate GTP. S266 is a Mg(2+) binding site. The tract at residues 285-287 is G2 motif; that stretch reads ITR. Mg(2+) contacts are provided by T286 and D359. Positions 359–362 are G3 motif; it reads DLPG. The G4 motif stretch occupies residues 427 to 430; it reads TKMD. Residues K428, D430, and S457 each coordinate GTP. Residues 456 to 459 are G5 motif; sequence ISKL. The interval 549 to 703 is stalk region; that stretch reads SAESYLAASL…TSDGIEISLK (155 aa). Residues 710–809 are paddle region; the sequence is DIQPNEWAQG…LSLRIQAAKS (100 aa). The segment at 810–877 is stalk region; that stretch reads RQCKTLTNKY…GGGLEKFARE (68 aa). C812 and C821 form a disulfide bridge. Residues 815–909 enclose the GED domain; that stretch reads LTNKYYCPEV…KIEELHRISS (95 aa).

Belongs to the TRAFAC class dynamin-like GTPase superfamily. Dynamin/Fzo/YdjA family. In terms of assembly, oligomeric complex consisting of membrane-bound and soluble forms of MGM1. Post-translationally, cleavage of the transit peptide by mitochondrial processing protease (MPP) produces a long integral membrane form of MGM1 (L-MGM1). Further processing by the rhomboid protease PCP1 produces a short peripheral membrane form of MGM1 (S-MGM1). Both forms are required for full activity.

The protein resides in the mitochondrion inner membrane. It localises to the mitochondrion intermembrane space. It carries out the reaction GTP + H2O = GDP + phosphate + H(+). Its function is as follows. Dynamin-related GTPase that is essential for normal mitochondrial morphology by mediating fusion of the mitochondrial inner membranes, regulating cristae morphology and maintaining respiratory chain function. Exists in two forms: the transmembrane, long form (Dynamin-like GTPase MGM1, long form; L-MGM1), which is tethered to the inner mitochondrial membrane, and the short soluble form (Dynamin-like GTPase MGM1, short form; S-MGM1), which results from proteolytic cleavage and localizes in the intermembrane space. Both forms (L-MGM1 and S-MGM1) cooperate to catalyze the fusion of the mitochondrial inner membrane. The equilibrium between L-MGM1 and S-MGM1 is essential: excess levels of S-MGM1, following loss of mitochondrial membrane potential, lead to an impaired equilibrium between L-MGM1 and S-MGM1, inhibiting mitochondrial fusion. Plays a role in the maintenance and remodeling of mitochondrial cristae, some invaginations of the mitochondrial inner membrane that provide an increase in the surface area. Probably acts by forming helical filaments at the inside of inner membrane tubes with the shape and dimensions of crista junctions. Constitutes the transmembrane long form (L-MGM1) that plays a central role in mitochondrial inner membrane fusion and cristae morphology. L-MGM1 and the soluble short form (S-MGM1) form higher-order helical assemblies that coordinate the fusion of mitochondrial inner membranes. Inner membrane-anchored L-MGM1 molecules initiate membrane remodeling by recruiting soluble S-MGM1 to rapidly polymerize into a flexible cylindrical scaffold encaging the mitochondrial inner membrane. Once at the membrane surface, the formation of S-MGM1 helices induce bilayer curvature. MGM1 dimerization through the paddle region, which inserts into cardiolipin-containing membrane, promotes GTP hydrolysis and the helical assembly of a flexible MGM1 lattice on the membrane, which drives membrane curvature and mitochondrial fusion. Functionally, constitutes the soluble short form (S-MGM1) generated by cleavage by PCP1, which plays a central role in mitochondrial inner membrane fusion and cristae morphology. The transmembrane long form (L-MGM1) and the S-MGM1 form higher-order helical assemblies that coordinate the fusion of mitochondrial inner membranes. Inner membrane-anchored L-MGM1 molecules initiate membrane remodeling by recruiting soluble S-MGM1 to rapidly polymerize into a flexible cylindrical scaffold encaging the mitochondrial inner membrane. Once at the membrane surface, the formation of S-MGM1 helices induce bilayer curvature. MGM1 dimerization through the paddle region, which inserts into cardiolipin-containing membrane, promotes GTP hydrolysis and the helical assembly of a flexible MGM1 lattice on the membrane, which drives membrane curvature and mitochondrial fusion. Excess levels of S-MGM1 produced by cleavage by PCP1 following stress conditions that induce loss of mitochondrial membrane potential, lead to an impaired equilibrium between L-MGM1 and S-MGM1, thereby inhibiting mitochondrial fusion. This Chaetomium thermophilum (strain DSM 1495 / CBS 144.50 / IMI 039719) (Thermochaetoides thermophila) protein is Dynamin-like GTPase MGM1, mitochondrial.